The chain runs to 277 residues: Large ribosomal subunit protein uL2c (277 aa).

The tract at residues 223–277 is disordered; that stretch reads VVMNPIDHPHGGGEGRAPIGRKKPLTPWGHPALGKRSRKNNKYSDTLILRRRKNS.

This sequence belongs to the universal ribosomal protein uL2 family. As to quaternary structure, part of the 50S ribosomal subunit.

The protein resides in the plastid. Its subcellular location is the chloroplast. This chain is Large ribosomal subunit protein uL2c (rpl2), found in Marchantia polymorpha (Common liverwort).